The sequence spans 666 residues: ATP-dependent zinc metalloprotease FtsH (666 aa).

A disordered region spans residues 1–23 (MSREVTSGLPQDKPTGSAPPPPP). Residues 1–27 (MSREVTSGLPQDKPTGSAPPPPPPWRR) lie on the Cytoplasmic side of the membrane. A helical membrane pass occupies residues 28–48 (WLLPIGLLVSLVLLFTFPMRP). At 49-125 (SSGKTLTYSE…RPPGPSLASQ (77 aa)) the chain is on the extracellular side. A helical membrane pass occupies residues 126–146 (VLAGVLSFLPFLLLLGLFAYS). The Cytoplasmic segment spans residues 147 to 666 (GRRAGAGFLA…RTAASSDDLL (520 aa)). Residue 219 to 226 (GPPGTGKT) participates in ATP binding. Residue histidine 442 participates in Zn(2+) binding. Glutamate 443 is an active-site residue. Zn(2+)-binding residues include histidine 446 and aspartate 518. Residues 626-666 (PEEHREAAARHVRRPGIAAATGASMAGGSEPRTAASSDDLL) are disordered. Residues 641-653 (GIAAATGASMAGG) are compositionally biased toward low complexity.

In the central section; belongs to the AAA ATPase family. It in the C-terminal section; belongs to the peptidase M41 family. Homohexamer. Zn(2+) serves as cofactor.

It localises to the cell membrane. Acts as a processive, ATP-dependent zinc metallopeptidase for both cytoplasmic and membrane proteins. Plays a role in the quality control of integral membrane proteins. The sequence is that of ATP-dependent zinc metalloprotease FtsH from Acidothermus cellulolyticus (strain ATCC 43068 / DSM 8971 / 11B).